A 606-amino-acid polypeptide reads, in one-letter code: Aspartate--tRNA(Asp/Asn) ligase (606 aa).

L-aspartate is bound at residue glutamate 172. The segment at 196 to 199 (QLFK) is aspartate. Arginine 218 contributes to the L-aspartate binding site. Residues 218 to 220 (RDE) and glutamine 227 contribute to the ATP site. Histidine 448 contacts L-aspartate. Glutamate 482 is a binding site for ATP. Position 489 (arginine 489) interacts with L-aspartate. 534–537 (GWDR) serves as a coordination point for ATP.

This sequence belongs to the class-II aminoacyl-tRNA synthetase family. Type 1 subfamily. As to quaternary structure, homodimer.

It localises to the cytoplasm. The enzyme catalyses tRNA(Asx) + L-aspartate + ATP = L-aspartyl-tRNA(Asx) + AMP + diphosphate. Aspartyl-tRNA synthetase with relaxed tRNA specificity since it is able to aspartylate not only its cognate tRNA(Asp) but also tRNA(Asn). Reaction proceeds in two steps: L-aspartate is first activated by ATP to form Asp-AMP and then transferred to the acceptor end of tRNA(Asp/Asn). This is Aspartate--tRNA(Asp/Asn) ligase from Saccharopolyspora erythraea (strain ATCC 11635 / DSM 40517 / JCM 4748 / NBRC 13426 / NCIMB 8594 / NRRL 2338).